We begin with the raw amino-acid sequence, 268 residues long: Ribosomal RNA small subunit methyltransferase A (268 aa).

S-adenosyl-L-methionine is bound by residues asparagine 18, leucine 20, glycine 45, glutamate 66, aspartate 91, and asparagine 112.

Belongs to the class I-like SAM-binding methyltransferase superfamily. rRNA adenine N(6)-methyltransferase family. RsmA subfamily.

It localises to the cytoplasm. The catalysed reaction is adenosine(1518)/adenosine(1519) in 16S rRNA + 4 S-adenosyl-L-methionine = N(6)-dimethyladenosine(1518)/N(6)-dimethyladenosine(1519) in 16S rRNA + 4 S-adenosyl-L-homocysteine + 4 H(+). Functionally, specifically dimethylates two adjacent adenosines (A1518 and A1519) in the loop of a conserved hairpin near the 3'-end of 16S rRNA in the 30S particle. May play a critical role in biogenesis of 30S subunits. In Shewanella baltica (strain OS223), this protein is Ribosomal RNA small subunit methyltransferase A.